We begin with the raw amino-acid sequence, 278 residues long: E3 ubiquitin-protein ligase CHIP (278 aa).

TPR repeat units follow at residues 10–43 (AERL…SPNV), 45–77 (AYWT…VHNS), and 78–111 (VKAH…GRCS). Positions 143–194 (ELNSLKETCEAALNQQRALDMSRTEESSDEAYTAHTERLKALERVFKKAAEE) form a coiled coil. A U-box domain is found at 199–273 (EVPDYLCCNI…AAYLEKHVWA (75 aa)).

As to quaternary structure, interacts with HSC70-4, PP2AA1, PP2AA3 and PP2A5, as well as with UBC8, UBC9 and UBC10. Also interacts with the chloroplastic proteolytic subunits ClpP4, FtsH1 and FtsH2.

The catalysed reaction is S-ubiquitinyl-[E2 ubiquitin-conjugating enzyme]-L-cysteine + [acceptor protein]-L-lysine = [E2 ubiquitin-conjugating enzyme]-L-cysteine + N(6)-ubiquitinyl-[acceptor protein]-L-lysine.. It participates in protein modification; protein ubiquitination. Its function is as follows. Has E3 ubiquitin-protein ligase activity and may target misfolded substrates towards proteasomal degradation. Regulates the activity of some serine/threonine-protein phosphatases by E3 ubiquitin-protein ligase activity. Required for responses to biotic and abiotic stresses such as auxin, abscisic acid (ABA), low and high temperature and darkness, probably through the activation of serine/threonine-protein phosphatase and the subsequent modification of the plasma membrane composition. Regulates the chloroplastic Clp proteolytic activity in response to stresses. Ubiquitylates FtsH1, a component of the chloroplast FtsH protease, and affects protein degradation in chloroplasts. Mediates plastid precursor degradation to prevent cytosolic precursor accumulation, together with the molecular chaperone HSC70-4. Mediates ubiquitination of transit peptides and thereby led to their degradation through the ubiquitin-proteasome system. The polypeptide is E3 ubiquitin-protein ligase CHIP (Arabidopsis thaliana (Mouse-ear cress)).